Consider the following 431-residue polypeptide: Saglin (431 aa).

A signal peptide spans 1-39; the sequence is MSVRGYSGVQVISSRKHRSMSRLPTVLLLLASAAVLAAG. N95 carries an N-linked (GlcNAc...) asparagine glycan. Residues 120–169 adopt a coiled-coil conformation; the sequence is LDDAQRQMEQEHRQYAATLEEQLHAAQQETQQEQEMKKALQKQLDALTDS.

As to quaternary structure, homodimer; disulfide-linked. In terms of assembly, (Microbial infection) Interacts with Plasmodium berghei TRAP (via integrin-like A-domain); the interaction probably promotes sporozoite invasion of salivary gland. In terms of tissue distribution, female saliva (at protein level). Female salivary gland (at protein level).

It localises to the secreted. In terms of biological role, (Microbial infection) Facilitates invasion of mosquito salivary glands by Plasmodium yoelii sporozoites. Functionally, (Microbial infection) Facilitates invasion of mosquito salivary glands by Plasmodium falciparum sporozoites. Its function is as follows. (Microbial infection) Probably facilitates invasion of mosquito salivary glands by Plasmodium berghei sporozoites. This chain is Saglin, found in Anopheles gambiae (African malaria mosquito).